The sequence spans 281 residues: Microtubule-associated protein RP/EB family member 3 (281 aa).

A Calponin-homology (CH) domain is found at 14–116; it reads NLSRHDMLAW…FIQWFKKFFD (103 aa). Residues 157–181 are disordered; that stretch reads VPQRTSPTGPKNMQTSGRLSNVAPP. Polar residues predominate over residues 158 to 175; sequence PQRTSPTGPKNMQTSGRL. Residues Ser-162 and Ser-176 each carry the phosphoserine modification. The 71-residue stretch at 194 to 264 folds into the EB1 C-terminal domain; sequence GGHETDAQIL…LYATEEGFAP (71 aa). The tract at residues 217–260 is APC-binding; that stretch reads DGLEKERDFYFSKLRDIELICQEHESENSPVISGIIGILYATEE. Residues 217-281 are DCTN1-binding; sequence DGLEKERDFY…EHQQEDQDEY (65 aa). The tract at residues 261 to 281 is disordered; the sequence is GFAPPEDDEIEEHQQEDQDEY. The segment covering 272-281 has biased composition (basic and acidic residues); it reads EHQQEDQDEY.

Belongs to the MAPRE family. Homodimer. Heterodimer with MAPRE1. Binds monomeric and polymerized GTP-bound tubulin. Interacts with APC2. Interacts with DCTN1 and SRCIN1. Binds to the C-terminal domain of APC. Interacts (via C-terminus) with CLIP1. Interacts with SLAIN2 and SLAIN1. Interacts with AKAP9. Interacts with PDE4DIP. Interacts with PDE4DIP isoform 13/MMG8/SMYLE; this interaction is required for its recruitment to the Golgi apparatus. Predominantly expressed in brain and muscle.

Its subcellular location is the cytoplasm. It localises to the cytoskeleton. Plus-end tracking protein (+TIP) that binds to the plus-end of microtubules and regulates the dynamics of the microtubule cytoskeleton. Promotes microtubule growth. May be involved in spindle function by stabilizing microtubules and anchoring them at centrosomes. Also acts as a regulator of minus-end microtubule organization: interacts with the complex formed by AKAP9 and PDE4DIP, leading to recruit CAMSAP2 to the Golgi apparatus, thereby tethering non-centrosomal minus-end microtubules to the Golgi, an important step for polarized cell movement. Promotes elongation of CAMSAP2-decorated microtubule stretches on the minus-end of microtubules. The chain is Microtubule-associated protein RP/EB family member 3 (MAPRE3) from Homo sapiens (Human).